We begin with the raw amino-acid sequence, 391 residues long: Ectodysplasin-A (391 aa).

Over 1-41 (MGYPEVERRELLPAAAPRERGSQGCGCGGAPARAGEGNSCL) the chain is Cytoplasmic. A helical; Signal-anchor for type II membrane protein membrane pass occupies residues 42 to 62 (LFLGFFGLSLALHLLTLCCYL). At 63–391 (ELRSELRRER…AIRLGEAPAS (329 aa)) the chain is on the extracellular side. Disordered stretches follow at residues 73–127 (GAES…HSDS) and 146–245 (YSEE…GTRE). Positions 86–101 (TSGTLSSLGGLDPDSP) are enriched in low complexity. The span at 102 to 113 (ITSHLGQPSPKQ) shows a compositional bias: polar residues. Positions 180–229 (GPPGPNGPPGPPGPPGPQGPPGIPGIPGIPGTTVMGPPGPPGPPGPQGPP) constitute a Collagen-like domain. 2 stretches are compositionally biased toward pro residues: residues 181 to 203 (PPGP…PGIP) and 216 to 228 (PPGP…PQGP). The region spanning 249 to 385 (AVVHLQGQGS…HTTFFGAIRL (137 aa)) is the THD domain. N-linked (GlcNAc...) asparagine glycosylation is present at Asn-313. The cysteines at positions 332 and 346 are disulfide-linked. N-linked (GlcNAc...) asparagine glycosylation occurs at Asn-372.

Belongs to the tumor necrosis factor family. In terms of assembly, homotrimer. The homotrimers may then dimerize and form higher-order oligomers. In terms of processing, N-glycosylated. Processing by furin produces a secreted form. Not abundant; expressed in specific cell types of ectodermal (but not mesodermal) origin of keratinocytes, hair follicles, sweat glands. Also in adult heart, liver, muscle, pancreas, prostate, fetal liver, uterus, small intestine and umbilical cord.

Its subcellular location is the cell membrane. The protein resides in the secreted. In terms of biological role, cytokine which is involved in epithelial-mesenchymal signaling during morphogenesis of ectodermal organs. Functions as a ligand activating the DEATH-domain containing receptors EDAR and EDA2R. May also play a role in cell adhesion. Its function is as follows. Binds only to the receptor EDAR, while isoform 3 binds exclusively to the receptor EDA2R. Binds only to the receptor EDA2R. This Homo sapiens (Human) protein is Ectodysplasin-A (EDA).